A 579-amino-acid polypeptide reads, in one-letter code: MSEKHPGPLVVEGKLSDAERMKLESNYLRGTIAEDLNDGLTGGFKGDNFLLIRFHGMYQQDDRDIRAERAAQKLEPRHAMLLRCRLPGGVITTTQWQAIDKFAADNTIYGSIRLTNRQTFQFHGILKKNVKPVHQMLHSVGLDALATANDMNRNVLCTSNPYESQLHAEAYEWAKKISEHLLPRTRAYAEIWLDQEKVATTDEEPILGATYLPRKFKTTVVIPPQNDIDLHANDMNFVAIAENGKLVGFNLLVGGGLSIEHGNKKTYARTASEFGYLPLEHTLAVAEAVVTTQRDWGNRTDRKNAKTKYTLERVGVDTFKEEVERRAGIKFEPIRPYEFTGRGDRIGWVKGIDNNWHLTLFIENGRILDYPGRPLKTGLLEIAKIHQGEFRITANQNLIIASVPESQKAKIEKLARDHGLMNAVSAQRENSMACVSFPTCPLAMAEAERFLPSFTDKVEAILEKHGIPDEHIVMRVTGCPNGCGRAMLAEIGLVGKAPGRYNLHLGGNRIGTRIPRMYQENITEPDILASLDQLIGRWAKEREAGEGFGDFTVRAGIIRPVLDPARDFWDNLNCRMASV.

Residues Cys434, Cys440, Cys479, and Cys483 each contribute to the [4Fe-4S] cluster site. Cys483 contacts siroheme.

It belongs to the nitrite and sulfite reductase 4Fe-4S domain family. In terms of assembly, alpha(8)-beta(8). The alpha component is a flavoprotein, the beta component is a hemoprotein. It depends on siroheme as a cofactor. [4Fe-4S] cluster is required as a cofactor.

The enzyme catalyses hydrogen sulfide + 3 NADP(+) + 3 H2O = sulfite + 3 NADPH + 4 H(+). Its pathway is sulfur metabolism; hydrogen sulfide biosynthesis; hydrogen sulfide from sulfite (NADPH route): step 1/1. Its function is as follows. Component of the sulfite reductase complex that catalyzes the 6-electron reduction of sulfite to sulfide. This is one of several activities required for the biosynthesis of L-cysteine from sulfate. This chain is Sulfite reductase [NADPH] hemoprotein beta-component, found in Salmonella choleraesuis (strain SC-B67).